Consider the following 1229-residue polypeptide: Pesticidal crystal protein Cry1Bb (1229 aa).

The protein belongs to the delta endotoxin family.

Functionally, promotes colloidosmotic lysis by binding to the midgut epithelial cells of many lepidopteran larvae. The protein is Pesticidal crystal protein Cry1Bb (cry1Bb) of Bacillus thuringiensis.